The sequence spans 122 residues: Spermidine export protein MdtJ (122 aa).

Transmembrane regions (helical) follow at residues 1–21 (MIYW…TLSM), 31–51 (TGHI…SMAV), 54–74 (VALG…ITLF), and 81–101 (EPIS…IMLV).

Belongs to the drug/metabolite transporter (DMT) superfamily. Small multidrug resistance (SMR) (TC 2.A.7.1) family. MdtJ subfamily. In terms of assembly, forms a complex with MdtI.

Its subcellular location is the cell inner membrane. In terms of biological role, catalyzes the excretion of spermidine. This Serratia proteamaculans (strain 568) protein is Spermidine export protein MdtJ.